The sequence spans 303 residues: Aspartate carbamoyltransferase catalytic subunit (303 aa).

Carbamoyl phosphate is bound by residues arginine 54 and threonine 55. Residue lysine 83 coordinates L-aspartate. The carbamoyl phosphate site is built by arginine 104, histidine 132, and glutamine 135. Residues arginine 164 and arginine 226 each contribute to the L-aspartate site. The carbamoyl phosphate site is built by leucine 265 and proline 266.

This sequence belongs to the aspartate/ornithine carbamoyltransferase superfamily. ATCase family. As to quaternary structure, heterooligomer of catalytic and regulatory chains.

It carries out the reaction carbamoyl phosphate + L-aspartate = N-carbamoyl-L-aspartate + phosphate + H(+). Its pathway is pyrimidine metabolism; UMP biosynthesis via de novo pathway; (S)-dihydroorotate from bicarbonate: step 2/3. In terms of biological role, catalyzes the condensation of carbamoyl phosphate and aspartate to form carbamoyl aspartate and inorganic phosphate, the committed step in the de novo pyrimidine nucleotide biosynthesis pathway. In Methanocorpusculum labreanum (strain ATCC 43576 / DSM 4855 / Z), this protein is Aspartate carbamoyltransferase catalytic subunit.